The following is a 372-amino-acid chain: Fatty acid 2-hydroxylase (372 aa).

In terms of domain architecture, Cytochrome b5 heme-binding spans 8–86 (AASFTSAEVQ…LEQYYVGELR (79 aa)). Heme-binding residues include His43 and His69. 2 consecutive transmembrane segments (helical) span residues 168–188 (VWYS…WSYY) and 213–233 (SVFI…EYLI). The Fatty acid hydroxylase domain maps to 219–361 (FVLGMLIWTL…TKLWDYFFHT (143 aa)). 5 residues coordinate Zn(2+): His234, His239, His257, His260, and His261. A run of 2 helical transmembrane segments spans residues 268-288 (SRLV…YVFL) and 290-310 (LILP…GYVL). The Zn(2+) site is built by His315, His319, His336, His339, and His340.

The protein belongs to the sterol desaturase family. SCS7 subfamily. Zn(2+) serves as cofactor. In terms of tissue distribution, detected in oligodendrocytes (at protein level). Detected in sciatic nerve.

Its subcellular location is the endoplasmic reticulum membrane. It is found in the microsome membrane. It carries out the reaction a 1,2-saturated fatty acid + 2 Fe(II)-[cytochrome b5] + O2 + 2 H(+) = a (R)-2-hydroxy fatty acid + 2 Fe(III)-[cytochrome b5] + H2O. The catalysed reaction is hexadecanoate + 2 Fe(II)-[cytochrome b5] + O2 + 2 H(+) = (R)-2-hydroxyhexadecanoate + 2 Fe(III)-[cytochrome b5] + H2O. The enzyme catalyses octadecanoate + 2 Fe(II)-[cytochrome b5] + O2 + 2 H(+) = (R)-2-hydroxyoctadecanoate + 2 Fe(III)-[cytochrome b5] + H2O. It catalyses the reaction docosanoate + 2 Fe(II)-[cytochrome b5] + O2 + 2 H(+) = 2-hydroxydocosanoate + 2 Fe(III)-[cytochrome b5] + H2O. It carries out the reaction tetracosanoate + 2 Fe(II)-[cytochrome b5] + O2 + 2 H(+) = (R)-2-hydroxytetracosanoate + 2 Fe(III)-[cytochrome b5] + H2O. The protein operates within lipid metabolism; fatty acid metabolism. It functions in the pathway sphingolipid metabolism; galactosylceramide biosynthesis. In terms of biological role, catalyzes the hydroxylation of free fatty acids at the C-2 position to produce 2-hydroxy fatty acids, which are building blocks of sphingolipids and glycosphingolipids common in neural tissue and epidermis. FA2H is stereospecific for the production of (R)-2-hydroxy fatty acids. Plays an essential role in the synthesis of galactosphingolipids of the myelin sheath. Responsible for the synthesis of sphingolipids and glycosphingolipids involved in the formation of epidermal lamellar bodies critical for skin permeability barrier. Participates in the synthesis of glycosphingolipids and a fraction of type II wax diesters in sebaceous gland, specifically regulating hair follicle homeostasis. Involved in the synthesis of sphingolipids of plasma membrane rafts, controlling lipid raft mobility and trafficking of raft-associated proteins. The sequence is that of Fatty acid 2-hydroxylase from Rattus norvegicus (Rat).